The sequence spans 583 residues: Protein cps3 (583 aa).

2 consecutive C3H1-type zinc fingers follow at residues 35–62 (SLQH…HDLE) and 64–91 (ATEK…HVLP). Disordered regions lie at residues 318-346 (LGRP…NGST), 471-490 (KVSS…YNGT), and 504-532 (RQES…KNLG). Composition is skewed to polar residues over residues 323–334 (KSPSVPTSVGSN), 475–490 (NLNS…YNGT), and 513–532 (PSLN…KNLG).

It localises to the cytoplasm. Responsible for supersensitivity to the spindle poison, isopropyl N-3-chlorophenyl carbamate. Has a role in meiosis. This Schizosaccharomyces pombe (strain 972 / ATCC 24843) (Fission yeast) protein is Protein cps3 (cps3).